The sequence spans 306 residues: Bifunctional protein FolD (306 aa).

NADP(+) contacts are provided by residues 164–166 (GRS), Ser-189, and Thr-230.

It belongs to the tetrahydrofolate dehydrogenase/cyclohydrolase family. As to quaternary structure, homodimer.

It catalyses the reaction (6R)-5,10-methylene-5,6,7,8-tetrahydrofolate + NADP(+) = (6R)-5,10-methenyltetrahydrofolate + NADPH. The catalysed reaction is (6R)-5,10-methenyltetrahydrofolate + H2O = (6R)-10-formyltetrahydrofolate + H(+). Its pathway is one-carbon metabolism; tetrahydrofolate interconversion. Functionally, catalyzes the oxidation of 5,10-methylenetetrahydrofolate to 5,10-methenyltetrahydrofolate and then the hydrolysis of 5,10-methenyltetrahydrofolate to 10-formyltetrahydrofolate. The protein is Bifunctional protein FolD of Solibacter usitatus (strain Ellin6076).